The following is a 90-amino-acid chain: Small ribosomal subunit protein uS17 (90 aa).

This sequence belongs to the universal ribosomal protein uS17 family. As to quaternary structure, part of the 30S ribosomal subunit.

Functionally, one of the primary rRNA binding proteins, it binds specifically to the 5'-end of 16S ribosomal RNA. In Treponema denticola (strain ATCC 35405 / DSM 14222 / CIP 103919 / JCM 8153 / KCTC 15104), this protein is Small ribosomal subunit protein uS17.